The sequence spans 151 residues: uncharacterized protein (151 aa).

Residues 1–24 (MHAKTKKLGTDTSYKRPQVTAQEQ) are disordered.

This is an uncharacterized protein from Acanthamoeba polyphaga mimivirus (APMV).